The sequence spans 729 residues: Cytoplasmic polyadenylation element-binding protein 4 (729 aa).

2 disordered regions span residues 20–49 (FPVR…NNNT) and 78–133 (EKAK…KEKI). A compositionally biased stretch (basic residues) spans 24–35 (FHPHLQPPHHHQ). Residues 83 to 96 (QQQEQQDPLEKQQL) show a composition bias toward low complexity. A phosphoserine mark is found at Ser-97, Ser-99, and Ser-137. The tract at residues 218-328 (FGGSFSPQIG…RGLNGGITPL (111 aa)) is disordered. Residues 232–249 (HHPHHPHFQHHHSQHQQQ) show a composition bias toward basic residues. Residues Ser-252 and Ser-255 each carry the phosphoserine modification. Residues 285–300 (WSSYQSPSPTPSSSWS) are compositionally biased toward low complexity. Positions 301–313 (PGGGGYGGWGGSQ) are enriched in gly residues. A Phosphothreonine modification is found at Thr-326. 2 positions are modified to phosphoserine: Ser-330 and Ser-332. 2 RRM domains span residues 472 to 563 (RKVF…PWNL) and 580 to 662 (KTIF…PYVL). The interval 541 to 543 (KLY) is RNA-binding. 8 residues coordinate Zn(2+): Cys-667, Cys-675, Cys-684, Cys-689, Cys-694, Cys-697, His-702, and His-710.

The protein belongs to the RRM CPEB family. Interacts with TOB1. Expressed in pancreas in islets and ductal cells (at protein level). Expressed in melanocytes.

The protein resides in the cytoplasm. Its subcellular location is the cell projection. It is found in the dendrite. The protein localises to the dendritic spine. It localises to the postsynaptic density. The protein resides in the axon. Its subcellular location is the growth cone. It is found in the endoplasmic reticulum. The protein localises to the perinuclear region. Its function is as follows. Sequence-specific RNA-binding protein that binds to the cytoplasmic polyadenylation element (CPE), an uridine-rich sequence element (consensus sequence 5'-UUUUUAU-3') within the mRNA 3'-UTR. RNA binding results in a clear conformational change analogous to the Venus fly trap mechanism. Regulates activation of unfolded protein response (UPR) in the process of adaptation to ER stress in liver, by maintaining translation of CPE-regulated mRNAs in conditions in which global protein synthesis is inhibited. Required for cell cycle progression, specifically for cytokinesis and chromosomal segregation. Plays a role as an oncogene promoting tumor growth and progression by positively regulating translation of t-plasminogen activator/PLAT. Stimulates proliferation of melanocytes. In contrast to CPEB1 and CPEB3, does not play role in synaptic plasticity, learning and memory. In Homo sapiens (Human), this protein is Cytoplasmic polyadenylation element-binding protein 4 (CPEB4).